Reading from the N-terminus, the 348-residue chain is Phospho-2-dehydro-3-deoxyheptonate aldolase, Trp-sensitive (348 aa).

It belongs to the class-I DAHP synthase family.

It carries out the reaction D-erythrose 4-phosphate + phosphoenolpyruvate + H2O = 7-phospho-2-dehydro-3-deoxy-D-arabino-heptonate + phosphate. It participates in metabolic intermediate biosynthesis; chorismate biosynthesis; chorismate from D-erythrose 4-phosphate and phosphoenolpyruvate: step 1/7. In terms of biological role, stereospecific condensation of phosphoenolpyruvate (PEP) and D-erythrose-4-phosphate (E4P) giving rise to 3-deoxy-D-arabino-heptulosonate-7-phosphate (DAHP). This Escherichia coli O6:H1 (strain CFT073 / ATCC 700928 / UPEC) protein is Phospho-2-dehydro-3-deoxyheptonate aldolase, Trp-sensitive (aroH).